We begin with the raw amino-acid sequence, 355 residues long: Neutral protease 2 homolog MEP6 (355 aa).

Residues 1–19 form the signal peptide; sequence MRLSSSLIALVALAGQALA. The propeptide occupies 20–179; the sequence is LPFNELAERD…ASAIPELNKR (160 aa). Intrachain disulfides connect cysteine 187–cysteine 259 and cysteine 266–cysteine 283. A Zn(2+)-binding site is contributed by histidine 307. Residue glutamate 308 is part of the active site. The Zn(2+) site is built by histidine 311 and aspartate 322.

It belongs to the peptidase M35 family. Requires Zn(2+) as cofactor.

The protein localises to the secreted. It catalyses the reaction Preferential cleavage of bonds with hydrophobic residues in P1'. Also 3-Asn-|-Gln-4 and 8-Gly-|-Ser-9 bonds in insulin B chain.. Secreted metalloproteinase that allows assimilation of proteinaceous substrates. Shows high activities on basic nuclear substrates such as histone and protamine. May be involved in virulence. This Coccidioides posadasii (strain C735) (Valley fever fungus) protein is Neutral protease 2 homolog MEP6 (MEP6).